Consider the following 579-residue polypeptide: Proline--tRNA ligase (579 aa).

This sequence belongs to the class-II aminoacyl-tRNA synthetase family. ProS type 1 subfamily. As to quaternary structure, homodimer.

Its subcellular location is the cytoplasm. It carries out the reaction tRNA(Pro) + L-proline + ATP = L-prolyl-tRNA(Pro) + AMP + diphosphate. Its function is as follows. Catalyzes the attachment of proline to tRNA(Pro) in a two-step reaction: proline is first activated by ATP to form Pro-AMP and then transferred to the acceptor end of tRNA(Pro). As ProRS can inadvertently accommodate and process non-cognate amino acids such as alanine and cysteine, to avoid such errors it has two additional distinct editing activities against alanine. One activity is designated as 'pretransfer' editing and involves the tRNA(Pro)-independent hydrolysis of activated Ala-AMP. The other activity is designated 'posttransfer' editing and involves deacylation of mischarged Ala-tRNA(Pro). The misacylated Cys-tRNA(Pro) is not edited by ProRS. The sequence is that of Proline--tRNA ligase from Hamiltonella defensa subsp. Acyrthosiphon pisum (strain 5AT).